The chain runs to 550 residues: Glucose-6-phosphate isomerase (550 aa).

Glu357 serves as the catalytic Proton donor. Catalysis depends on residues His389 and Lys509.

It belongs to the GPI family.

Its subcellular location is the cytoplasm. The catalysed reaction is alpha-D-glucose 6-phosphate = beta-D-fructose 6-phosphate. The protein operates within carbohydrate biosynthesis; gluconeogenesis. It participates in carbohydrate degradation; glycolysis; D-glyceraldehyde 3-phosphate and glycerone phosphate from D-glucose: step 2/4. Functionally, catalyzes the reversible isomerization of glucose-6-phosphate to fructose-6-phosphate. This Anaeromyxobacter dehalogenans (strain 2CP-C) protein is Glucose-6-phosphate isomerase.